The following is a 734-amino-acid chain: Photosystem I P700 chlorophyll a apoprotein A2 (734 aa).

8 helical membrane-spanning segments follow: residues 46–69, 135–158, 175–199, 273–291, 330–353, 369–395, 417–439, and 517–535; these read IFAS…FHVA, LYTG…LHLQ, LNHH…HVAI, IAHH…GHMY, IHFQ…QHMY, AALY…IFFI, AIIS…LYVH, and FLVH…LILV. Residues C559 and C568 each coordinate [4Fe-4S] cluster. Helical transmembrane passes span 575 to 596 and 643 to 665; these read AFYL…YWHW and LSVW…MFLI. 3 residues coordinate chlorophyll a: H654, M662, and Y670. W671 serves as a coordination point for phylloquinone. The helical transmembrane segment at 707 to 727 threads the bilayer; the sequence is LVGLAHFSVGYIFTYAAFLIA.

Belongs to the PsaA/PsaB family. In terms of assembly, the PsaA/B heterodimer binds the P700 chlorophyll special pair and subsequent electron acceptors. PSI consists of a core antenna complex that captures photons, and an electron transfer chain that converts photonic excitation into a charge separation. The eukaryotic PSI reaction center is composed of at least 11 subunits. It depends on P700 is a chlorophyll a/chlorophyll a' dimer, A0 is one or more chlorophyll a, A1 is one or both phylloquinones and FX is a shared 4Fe-4S iron-sulfur center. as a cofactor.

Its subcellular location is the plastid. It localises to the chloroplast thylakoid membrane. It carries out the reaction reduced [plastocyanin] + hnu + oxidized [2Fe-2S]-[ferredoxin] = oxidized [plastocyanin] + reduced [2Fe-2S]-[ferredoxin]. Functionally, psaA and PsaB bind P700, the primary electron donor of photosystem I (PSI), as well as the electron acceptors A0, A1 and FX. PSI is a plastocyanin-ferredoxin oxidoreductase, converting photonic excitation into a charge separation, which transfers an electron from the donor P700 chlorophyll pair to the spectroscopically characterized acceptors A0, A1, FX, FA and FB in turn. Oxidized P700 is reduced on the lumenal side of the thylakoid membrane by plastocyanin. The polypeptide is Photosystem I P700 chlorophyll a apoprotein A2 (Gossypium hirsutum (Upland cotton)).